A 365-amino-acid chain; its full sequence is Putative nudix hydrolase 1 (365 aa).

The region spanning Val72–Val201 is the Nudix hydrolase domain. Residues Gly109–Gly130 carry the Nudix box motif. Mg(2+) is bound by residues Glu124 and Glu128.

The protein belongs to the Nudix hydrolase family. It depends on Mg(2+) as a cofactor. The cofactor is Mn(2+).

Probably mediates the hydrolysis of some nucleoside diphosphate derivatives. The polypeptide is Putative nudix hydrolase 1 (ndx-1) (Caenorhabditis elegans).